Reading from the N-terminus, the 200-residue chain is Superoxide dismutase [Fe] (200 aa).

Positions 28, 82, 165, and 169 each coordinate Fe cation.

This sequence belongs to the iron/manganese superoxide dismutase family. Homodimer. Requires Fe cation as cofactor.

It catalyses the reaction 2 superoxide + 2 H(+) = H2O2 + O2. Destroys superoxide anion radicals which are normally produced within the cells and which are toxic to biological systems. The protein is Superoxide dismutase [Fe] (sodB) of Rhodobacter capsulatus (Rhodopseudomonas capsulata).